A 517-amino-acid chain; its full sequence is Sterol 14-alpha demethylase CYP51C (517 aa).

The helical transmembrane segment at 10-30 (TLPLSVSIPLTTSIIIILSIV) threads the bilayer. Tyr-115 serves as a coordination point for lanosterol. An itraconazole-binding site is contributed by Gly-300. Cys-458 is a binding site for heme.

Belongs to the cytochrome P450 family. Requires heme as cofactor.

The protein resides in the endoplasmic reticulum membrane. Its pathway is steroid metabolism; ergosterol biosynthesis. In terms of biological role, together with cyp51A and cyp51B, encodes the sterol 14alpha-demethylase that plays a critical role in the third module of ergosterol biosynthesis pathway, being ergosterol the major sterol component in fungal membranes that participates in a variety of functions. Cyp51C does not seem to encode an active sterol 14-alpha-demethylase, but can impact indirectly on sterol 14alpha-demethylation, and is required for full virulence on host wheat ears, but not on Arabidopsis floral tissue or the fruits of apple and tomato. The third module or late pathway involves the ergosterol synthesis itself through consecutive reactions that mainly occur in the endoplasmic reticulum (ER) membrane. In filamentous fungi, during the initial step of this module, lanosterol (lanosta-8,24-dien-3beta-ol) can be metabolized to eburicol. Sterol 14alpha-demethylase catalyzes the three-step oxidative removal of the 14alpha-methyl group (C-32) of both these sterols in the form of formate, and converts eburicol and lanosterol to 14-demethyleburicol (4,4,24-trimethylergosta-8,14,24(28)-trienol) and 4,4-dimethyl-5alpha-cholesta-8,14,24-trien-3beta-ol, respectively, which are further metabolized by other enzymes in the pathway to ergosterol. The protein is Sterol 14-alpha demethylase CYP51C of Gibberella zeae (strain ATCC MYA-4620 / CBS 123657 / FGSC 9075 / NRRL 31084 / PH-1) (Wheat head blight fungus).